The chain runs to 320 residues: Cytochrome f (320 aa).

Positions methionine 1 to alanine 35 are cleaved as a signal peptide. Heme is bound by residues tyrosine 36, cysteine 56, cysteine 59, and histidine 60. The chain crosses the membrane as a helical span at residues valine 286–lysine 306.

This sequence belongs to the cytochrome f family. As to quaternary structure, the 4 large subunits of the cytochrome b6-f complex are cytochrome b6, subunit IV (17 kDa polypeptide, petD), cytochrome f and the Rieske protein, while the 4 small subunits are PetG, PetL, PetM and PetN. The complex functions as a dimer. Heme serves as cofactor.

Its subcellular location is the plastid. It is found in the chloroplast thylakoid membrane. Component of the cytochrome b6-f complex, which mediates electron transfer between photosystem II (PSII) and photosystem I (PSI), cyclic electron flow around PSI, and state transitions. This Acorus calamus (Sweet flag) protein is Cytochrome f.